The primary structure comprises 1050 residues: Toll-like receptor 7 (1050 aa).

The N-terminal stretch at 1 to 26 is a signal peptide; sequence MVFSMWTRKRQILIFLNMLLVSRVFG. At 27–837 the chain is on the extracellular side; that stretch reads FRWFPKTLPC…SLDLYTCELD (811 aa). LRR repeat units follow at residues 42-64, 65-87, 89-111, 126-149, 151-170, 171-195, 203-226, 228-247, 248-273, 275-289, 290-312, 314-337, 339-364, 369-392, 396-419, 421-443, 493-516, 517-542, 543-565, and 567-589; these read IPEAHVIVDCTDKHLTEIPEGIP, TNTTNLTLTINHIPSISPDSFRR, NHLEEIDLRCNCVPVLLGSKANV, LSDLKALYLDGNQLLEIPQDLPSS, HLLSLEANNIFSITKENLTE, LVNIETLYLGQNCYYRNPCNVSYSI, MRNLKVLSLKDNNVTAVPTTLPPN, LELYLYNNIIKKIQENDFNN, LNELQVLDLSGNCPRCYNVPYPCTPC, NNSPLQIHDNAFNSL, TELKVLRLHSNSLQHVPPTWFKN, RNLQELDLSQNYLAREIEEAKFLH, LPNLVELDFSFNYELQVYHASITLPH, LENLKILRVKGYVFKELKNSSLSV, LPRLEVLDLGTNFIKIADLNIFKH, ENLKLIDLSVNKISPSEESREVG, HIYGQTLDLSRNNIFFIKPSDFQH, LSFLKCLNLSGNTIGQTLNGSELWPL, RELRYLDFSNNRLDLLYSTAFEE, and QSLEVLDLSSNSHYFQAEGITHM. Residues Asn-66 and Asn-69 are each glycosylated (N-linked (GlcNAc...) asparagine). Asn-167, Asn-190, and Asn-215 each carry an N-linked (GlcNAc...) asparagine glycan. An N-linked (GlcNAc...) asparagine glycan is attached at Asn-387. Asn-524 and Asn-535 each carry an N-linked (GlcNAc...) asparagine glycan. Asn-591 carries N-linked (GlcNAc...) asparagine glycosylation. LRR repeat units lie at residues 596-619, 620-645, 650-673, 675-698, 699-722, 724-746, 747-770, and 773-796; these read LRLLDKLMMNDNDISTSASRTMES, DSLRILEFRGNHLDVLWRAGDNRYLD, LFNLEVLDISRNSLNSLPPEVFEG, PPNLKNLSLAKNGLKSFFWDRLQL, LKHLEILDLSHNQLTKVPERLANC, KSLTTLILKHNQIRQLTKYFLED, ALQLRYLDISSNKIQVIQKTSFPE, and LNNLEMLVLHHNRFLCNCDAVWFV. 2 N-linked (GlcNAc...) asparagine glycosylation sites follow: Asn-680 and Asn-721. Residue Asn-800 is glycosylated (N-linked (GlcNAc...) asparagine). Residues 838-858 form a helical membrane-spanning segment; it reads LTNLILFSVSISSVLFLMVVM. The Cytoplasmic segment spans residues 859–1050; that stretch reads TTSHLFFWDM…AYSQMFKETV (192 aa). Residues 890–1034 enclose the TIR domain; the sequence is SCYDAFIVYD…YFWQCLKNAL (145 aa).

Belongs to the Toll-like receptor family. As to quaternary structure, homodimer. Interacts with MYD88 via their respective TIR domains. Interacts with UNC93B1. Interacts with SMPDL3B. In terms of processing, the first cleavage is performed by asparagine endopeptidase or cathepsin family members. This initial cleavage event is followed by a trimming event that is solely cathepsin mediated and required for optimal receptor signaling.

Its subcellular location is the endosome membrane. The protein resides in the endoplasmic reticulum membrane. The protein localises to the lysosome. It localises to the cytoplasmic vesicle. It is found in the phagosome. Activated by guanosine analogs including deoxyguanosine, 7-thia-8-oxoguanosine or 7-deazaguanosine in a RNA-independent manner. Endosomal receptor that plays a key role in innate and adaptive immunity. Controls host immune response against pathogens through recognition of uridine-containing single strand RNAs (ssRNAs) of viral origin or guanosine analogs. Upon binding to agonists, undergoes dimerization that brings TIR domains from the two molecules into direct contact, leading to the recruitment of TIR-containing downstream adapter MYD88 through homotypic interaction. In turn, the Myddosome signaling complex is formed involving IRAK4, IRAK1, TRAF6, TRAF3 leading to activation of downstream transcription factors NF-kappa-B and IRF7 to induce pro-inflammatory cytokines and interferons, respectively. In plasmacytoid dendritic cells, RNASET2 endonuclease cooperates with PLD3 or PLD4 5'-&gt;3' exonucleases to process RNA and release 2',3'-cyclic guanosine monophosphate (2',3'-cGMP) and cytidine-rich RNA fragments that occupy TLR7 ligand-binding pockets and trigger a signaling-competent state. The chain is Toll-like receptor 7 (Tlr7) from Mus musculus (Mouse).